Reading from the N-terminus, the 278-residue chain is HTH-type transcriptional activator RhaS (278 aa).

An HTH araC/xylS-type domain is found at N174 to G272. DNA-binding regions (H-T-H motif) lie at residues D191 to T212 and V239 to F262.

Binds DNA as a dimer.

It is found in the cytoplasm. Functionally, activates expression of the rhaBAD and rhaT operons. This is HTH-type transcriptional activator RhaS from Escherichia coli (strain SMS-3-5 / SECEC).